Consider the following 341-residue polypeptide: HTH-type transcriptional repressor PurR (341 aa).

Positions 2–56 constitute an HTH lacI-type domain; that stretch reads ATIKDVAKRANVSTTTVSHVINKTRFVAEETRNAVWAAIKELHYSPSAVARSLKV. Residues 4-23 constitute a DNA-binding region (H-T-H motif); that stretch reads IKDVAKRANVSTTTVSHVIN. Residues 48–56 mediate DNA binding; that stretch reads SAVARSLKV. Hypoxanthine-binding residues include Tyr73, Arg190, Thr192, Phe221, and Asp275.

In terms of assembly, homodimer.

The protein operates within purine metabolism; purine nucleotide biosynthesis [regulation]. Functionally, is the main repressor of the genes involved in the de novo synthesis of purine nucleotides, regulating purB, purC, purEK, purF, purHD, purL, purMN and guaBA expression. PurR is allosterically activated to bind its cognate DNA by binding the purine corepressors, hypoxanthine or guanine, thereby effecting transcription repression. The chain is HTH-type transcriptional repressor PurR from Escherichia coli (strain UTI89 / UPEC).